Consider the following 670-residue polypeptide: ATP synthase subunit alpha 2 (670 aa).

180–187 (GDRATGKT) provides a ligand contact to ATP. Positions 525–670 (MPAEDAAGDI…DAEAEARHKR (146 aa)) are disordered. Over residues 543-588 (ARGDADRDADHGANREVSREVSPEASREVSREVSREVSHEADRDAA) the composition is skewed to basic and acidic residues. The span at 589–599 (ADAARVAGRAP) shows a compositional bias: low complexity. The segment covering 621–639 (ADGDRASASRPPPDARGDA) has biased composition (basic and acidic residues). Residues 650-661 (ADANVNADANVD) show a composition bias toward low complexity.

This sequence belongs to the ATPase alpha/beta chains family. As to quaternary structure, F-type ATPases have 2 components, CF(1) - the catalytic core - and CF(0) - the membrane proton channel. CF(1) has five subunits: alpha(3), beta(3), gamma(1), delta(1), epsilon(1). CF(0) has three main subunits: a(1), b(2) and c(9-12). The alpha and beta chains form an alternating ring which encloses part of the gamma chain. CF(1) is attached to CF(0) by a central stalk formed by the gamma and epsilon chains, while a peripheral stalk is formed by the delta and b chains.

It is found in the cell inner membrane. It catalyses the reaction ATP + H2O + 4 H(+)(in) = ADP + phosphate + 5 H(+)(out). Its function is as follows. Produces ATP from ADP in the presence of a proton gradient across the membrane. The alpha chain is a regulatory subunit. This is ATP synthase subunit alpha 2 from Burkholderia mallei (strain NCTC 10247).